Here is a 64-residue protein sequence, read N- to C-terminus: Small ribosomal subunit protein eS17 (64 aa).

This sequence belongs to the eukaryotic ribosomal protein eS17 family.

This Halorubrum lacusprofundi (strain ATCC 49239 / DSM 5036 / JCM 8891 / ACAM 34) protein is Small ribosomal subunit protein eS17.